The sequence spans 784 residues: DNA repair and recombination protein RAD54-like (784 aa).

The interval Met-1–Ala-50 is disordered. The segment at Arg-2–Gln-9 is required for chromatin remodeling, strand pairing activities and coupling of ATPase activity. Ser-20 is subject to Phosphoserine. Thr-22 carries the phosphothreonine modification. Positions Glu-36–Arg-47 are enriched in basic and acidic residues. In terms of domain architecture, Helicase ATP-binding spans Glu-172 to Glu-346. Asp-185 to Thr-192 lines the ATP pocket. The DEGH box motif lies at Asp-297 to His-300. In terms of domain architecture, Helicase C-terminal spans Leu-503 to Thr-660. Low complexity predominate over residues Val-747–Glu-756. The disordered stretch occupies residues Val-747 to Phe-784. A compositionally biased stretch (acidic residues) spans Asp-775–Phe-784.

Belongs to the SNF2/RAD54 helicase family. In terms of assembly, interacts (via N-terminus) with spn-A/Rad51.

It is found in the nucleus. Involved in mitotic DNA repair and meiotic recombination. Functions in the recombinational DNA repair pathway. Essential for interhomolog gene conversion (GC), but may have a less important role in intersister GC than spn-A/Rad51. In the presence of DNA, spn-A/Rad51 enhances the ATPase activity of okr/Rad54. In Drosophila erecta (Fruit fly), this protein is DNA repair and recombination protein RAD54-like.